Reading from the N-terminus, the 479-residue chain is Flotillin-like protein 3 (479 aa).

Residue Cys-36 is the site of S-palmitoyl cysteine attachment. 2 coiled-coil regions span residues 227–251 (KVKT…AALA) and 306–326 (EYET…KQAE).

The protein belongs to the band 7/mec-2 family. Flotillin subfamily. In terms of processing, may be palmitoylated.

Its subcellular location is the cell membrane. The protein localises to the membrane. The protein resides in the caveola. Its function is as follows. May act as a scaffolding protein within caveolar membranes, functionally participating in formation of caveolae or caveolae-like vesicles. This is Flotillin-like protein 3 (FLOT3) from Arabidopsis thaliana (Mouse-ear cress).